The sequence spans 270 residues: F-actin-capping protein subunit beta (270 aa).

The span at 245–258 (QTRSQKSTTDSQEQ) shows a compositional bias: polar residues. The tract at residues 245 to 270 (QTRSQKSTTDSQEQQQKEVIKGLQNL) is disordered.

This sequence belongs to the F-actin-capping protein beta subunit family. As to quaternary structure, component of the F-actin capping complex, composed of a heterodimer of an alpha and a beta subunit.

It is found in the cytoplasm. The protein localises to the cytoskeleton. The protein resides in the actin patch. Its function is as follows. F-actin-capping proteins bind in a Ca(2+)-independent manner to the fast growing ends of actin filaments (barbed end) thereby blocking the exchange of subunits at these ends. Unlike other capping proteins (such as gelsolin and severin), these proteins do not sever actin filaments. This chain is F-actin-capping protein subunit beta (CAP2), found in Candida glabrata (strain ATCC 2001 / BCRC 20586 / JCM 3761 / NBRC 0622 / NRRL Y-65 / CBS 138) (Yeast).